The following is a 280-amino-acid chain: ATP synthase gamma chain (280 aa).

Belongs to the ATPase gamma chain family. As to quaternary structure, F-type ATPases have 2 components, CF(1) - the catalytic core - and CF(0) - the membrane proton channel. CF(1) has five subunits: alpha(3), beta(3), gamma(1), delta(1), epsilon(1). CF(0) has three main subunits: a, b and c.

The protein localises to the cell membrane. Its function is as follows. Produces ATP from ADP in the presence of a proton gradient across the membrane. The gamma chain is believed to be important in regulating ATPase activity and the flow of protons through the CF(0) complex. The polypeptide is ATP synthase gamma chain (Mycoplasma mycoides subsp. mycoides SC (strain CCUG 32753 / NCTC 10114 / PG1)).